A 224-amino-acid polypeptide reads, in one-letter code: Elongation factor 1-beta (224 aa).

It belongs to the EF-1-beta/EF-1-delta family. In terms of assembly, EF-1 is composed of 4 subunits: alpha, beta (1B-alpha=beta'), delta (1B-beta), and gamma (1B-gamma).

EF-1-beta and EF-1-beta' stimulate the exchange of GDP bound to EF-1-alpha to GTP. The protein is Elongation factor 1-beta of Oryza sativa subsp. japonica (Rice).